A 256-amino-acid chain; its full sequence is Calsenilin (256 aa).

The disordered stretch occupies residues M1–G20. A Phosphoserine modification is found at S14. K26 is covalently cross-linked (Glycyl lysine isopeptide (Lys-Gly) (interchain with G-Cter in SUMO1)). S-palmitoyl cysteine attachment occurs at residues C45 and C46. The residue at position 60 (S60) is a Phosphoserine. A Phosphoserine; by CK1 modification is found at S63. Positions L67–P123 constitute an EF-hand 1; degenerate domain. Residue K90 forms a Glycyl lysine isopeptide (Lys-Gly) (interchain with G-Cter in SUMO1) linkage. EF-hand domains lie at D126–G161, T162–M197, and A210–I245. Ca(2+) contacts are provided by D175, N177, D179, Y181, E186, D223, N225, D227, and E234. The segment at E243–I256 is interaction with KCND2.

It belongs to the recoverin family. In terms of assembly, binds to DNA as a homomultimer. Dimerization is induced by binding to calcium. Interacts with the C-terminus of PSEN1 and PSEN2 and with PSEN2 CTF subunit. Associates with KCN1. Component of heteromultimeric potassium channels. Identified in potassium channel complexes containing KCND1, KCND2, KCND3, KCNIP1, KCNIP2, KCNIP3, KCNIP4, DPP6 and DPP10. Interacts with KCND2 and KCND3. In terms of processing, palmitoylated. Palmitoylation enhances association with the plasma membrane. Proteolytically cleaved by caspase-3. Post-translationally, phosphorylation at Ser-63 inhibits cleavage by CASP3. Highly expressed in brain. Widely expressed at lower levels. Expression levels are elevated in brain cortex regions affected by Alzheimer disease.

The protein resides in the cytoplasm. It localises to the cell membrane. It is found in the endoplasmic reticulum. Its subcellular location is the golgi apparatus. The protein localises to the nucleus. Functionally, calcium-dependent transcriptional repressor that binds to the DRE element of genes including PDYN and FOS. Affinity for DNA is reduced upon binding to calcium and enhanced by binding to magnesium. Seems to be involved in nociception. In terms of biological role, regulatory subunit of Kv4/D (Shal)-type voltage-gated rapidly inactivating A-type potassium channels, such as KCND2/Kv4.2 and KCND3/Kv4.3. Modulates channel expression at the cell membrane, gating characteristics, inactivation kinetics and rate of recovery from inactivation in a calcium-dependent and isoform-specific manner. May play a role in the regulation of PSEN2 proteolytic processing and apoptosis. Together with PSEN2 involved in modulation of amyloid-beta formation. The sequence is that of Calsenilin (KCNIP3) from Homo sapiens (Human).